Here is a 599-residue protein sequence, read N- to C-terminus: Elongation factor 4 (599 aa).

The 183-residue stretch at 4-186 folds into the tr-type G domain; sequence KFIRNFSIIA…AIIKHVPPPL (183 aa). GTP contacts are provided by residues 16–21 and 133–136; these read DHGKST and NKID.

The protein belongs to the TRAFAC class translation factor GTPase superfamily. Classic translation factor GTPase family. LepA subfamily.

The protein localises to the cell membrane. The enzyme catalyses GTP + H2O = GDP + phosphate + H(+). Functionally, required for accurate and efficient protein synthesis under certain stress conditions. May act as a fidelity factor of the translation reaction, by catalyzing a one-codon backward translocation of tRNAs on improperly translocated ribosomes. Back-translocation proceeds from a post-translocation (POST) complex to a pre-translocation (PRE) complex, thus giving elongation factor G a second chance to translocate the tRNAs correctly. Binds to ribosomes in a GTP-dependent manner. The chain is Elongation factor 4 from Ureaplasma urealyticum serovar 10 (strain ATCC 33699 / Western).